We begin with the raw amino-acid sequence, 589 residues long: Phosphoenolpyruvate carboxykinase [GTP] (589 aa).

Substrate-binding positions include arginine 75 and 207 to 209 (YGG). Mn(2+)-binding residues include lysine 216 and histidine 236. Serine 258 serves as a coordination point for substrate. Residue 259 to 264 (ASGKTN) participates in GTP binding. The active site involves serine 260. Aspartate 287 serves as a coordination point for Mn(2+). Substrate is bound at residue 374–376 (NSR). GTP-binding positions include arginine 376, arginine 407, and 500 to 503 (FAEN).

Belongs to the phosphoenolpyruvate carboxykinase [GTP] family. Requires Mn(2+) as cofactor.

The protein resides in the cytoplasm. It catalyses the reaction oxaloacetate + GTP = phosphoenolpyruvate + GDP + CO2. It participates in carbohydrate biosynthesis; gluconeogenesis. Catalyzes the conversion of oxaloacetate (OAA) to phosphoenolpyruvate (PEP), the rate-limiting step in the metabolic pathway that produces glucose from lactate and other precursors derived from the citric acid cycle. This is Phosphoenolpyruvate carboxykinase [GTP] from Thermoplasma volcanium (strain ATCC 51530 / DSM 4299 / JCM 9571 / NBRC 15438 / GSS1).